A 249-amino-acid polypeptide reads, in one-letter code: uncharacterized protein (249 aa).

11 to 34 (IFGGRSQIGGELARRLAAGATMVL) contacts NADP(+). S142 contacts substrate. Residue Y155 is the Proton acceptor of the active site.

The protein belongs to the short-chain dehydrogenases/reductases (SDR) family.

This is an uncharacterized protein from Mycobacterium tuberculosis (strain ATCC 25618 / H37Rv).